The chain runs to 200 residues: NADH-quinone oxidoreductase subunit C (200 aa).

This sequence belongs to the complex I 30 kDa subunit family. NDH-1 is composed of 14 different subunits. Subunits NuoB, C, D, E, F, and G constitute the peripheral sector of the complex.

The protein resides in the cell inner membrane. It carries out the reaction a quinone + NADH + 5 H(+)(in) = a quinol + NAD(+) + 4 H(+)(out). Functionally, NDH-1 shuttles electrons from NADH, via FMN and iron-sulfur (Fe-S) centers, to quinones in the respiratory chain. The immediate electron acceptor for the enzyme in this species is believed to be ubiquinone. Couples the redox reaction to proton translocation (for every two electrons transferred, four hydrogen ions are translocated across the cytoplasmic membrane), and thus conserves the redox energy in a proton gradient. The protein is NADH-quinone oxidoreductase subunit C of Burkholderia ambifaria (strain ATCC BAA-244 / DSM 16087 / CCUG 44356 / LMG 19182 / AMMD) (Burkholderia cepacia (strain AMMD)).